Here is a 97-residue protein sequence, read N- to C-terminus: Small ribosomal subunit protein bS6 (97 aa).

This sequence belongs to the bacterial ribosomal protein bS6 family.

In terms of biological role, binds together with bS18 to 16S ribosomal RNA. The protein is Small ribosomal subunit protein bS6 of Listeria innocua serovar 6a (strain ATCC BAA-680 / CLIP 11262).